The primary structure comprises 380 residues: Cytochrome b (380 aa).

4 consecutive transmembrane segments (helical) span residues 34–54 (FGSLLAVCLITQILTGLLLAM), 78–99 (WLLHNLHANGASFFFICIFLHI), 114–134 (WNTGVVLLLTLMATAFVGYVL), and 179–199 (FFALHFLLPFMIAGITIIHLM). H84 and H98 together coordinate heme b. Residues H183 and H197 each contribute to the heme b site. An a ubiquinone-binding site is contributed by H202. Helical transmembrane passes span 227-247 (IKDILGLTIMLTPLLTLTLFS), 289-309 (LGGVLALAASVLILLLIPFLH), 321-341 (LSQTLFWLLVANLLILTWVGS), and 348-368 (FIIIGQMASLSYFTILLILFP).

Belongs to the cytochrome b family. As to quaternary structure, the cytochrome bc1 complex contains 11 subunits: 3 respiratory subunits (MT-CYB, CYC1 and UQCRFS1), 2 core proteins (UQCRC1 and UQCRC2) and 6 low-molecular weight proteins (UQCRH/QCR6, UQCRB/QCR7, UQCRQ/QCR8, UQCR10/QCR9, UQCR11/QCR10 and a cleavage product of UQCRFS1). This cytochrome bc1 complex then forms a dimer. Requires heme b as cofactor.

It is found in the mitochondrion inner membrane. Functionally, component of the ubiquinol-cytochrome c reductase complex (complex III or cytochrome b-c1 complex) that is part of the mitochondrial respiratory chain. The b-c1 complex mediates electron transfer from ubiquinol to cytochrome c. Contributes to the generation of a proton gradient across the mitochondrial membrane that is then used for ATP synthesis. The polypeptide is Cytochrome b (MT-CYB) (Meleagris gallopavo (Wild turkey)).